Here is a 177-residue protein sequence, read N- to C-terminus: Protein GrpE (177 aa).

It belongs to the GrpE family. Homodimer.

It is found in the cytoplasm. Functionally, participates actively in the response to hyperosmotic and heat shock by preventing the aggregation of stress-denatured proteins, in association with DnaK and GrpE. It is the nucleotide exchange factor for DnaK and may function as a thermosensor. Unfolded proteins bind initially to DnaJ; upon interaction with the DnaJ-bound protein, DnaK hydrolyzes its bound ATP, resulting in the formation of a stable complex. GrpE releases ADP from DnaK; ATP binding to DnaK triggers the release of the substrate protein, thus completing the reaction cycle. Several rounds of ATP-dependent interactions between DnaJ, DnaK and GrpE are required for fully efficient folding. This chain is Protein GrpE, found in Thermus thermophilus (strain ATCC BAA-163 / DSM 7039 / HB27).